Consider the following 400-residue polypeptide: Formate-dependent phosphoribosylglycinamide formyltransferase (400 aa).

Residues glutamate 22–leucine 23 and glutamate 82 each bind N(1)-(5-phospho-beta-D-ribosyl)glycinamide. ATP contacts are provided by residues arginine 115, lysine 156, serine 161–glutamine 166, glutamate 196–isoleucine 199, and glutamate 204. The ATP-grasp domain maps to arginine 120 to leucine 309. Residues glutamate 268 and glutamate 280 each contribute to the Mg(2+) site. N(1)-(5-phospho-beta-D-ribosyl)glycinamide contacts are provided by residues aspartate 287, lysine 361, and arginine 368–arginine 369.

Belongs to the PurK/PurT family. In terms of assembly, homodimer.

The catalysed reaction is N(1)-(5-phospho-beta-D-ribosyl)glycinamide + formate + ATP = N(2)-formyl-N(1)-(5-phospho-beta-D-ribosyl)glycinamide + ADP + phosphate + H(+). It functions in the pathway purine metabolism; IMP biosynthesis via de novo pathway; N(2)-formyl-N(1)-(5-phospho-D-ribosyl)glycinamide from N(1)-(5-phospho-D-ribosyl)glycinamide (formate route): step 1/1. Its function is as follows. Involved in the de novo purine biosynthesis. Catalyzes the transfer of formate to 5-phospho-ribosyl-glycinamide (GAR), producing 5-phospho-ribosyl-N-formylglycinamide (FGAR). Formate is provided by PurU via hydrolysis of 10-formyl-tetrahydrofolate. The protein is Formate-dependent phosphoribosylglycinamide formyltransferase of Xanthomonas axonopodis pv. citri (strain 306).